Reading from the N-terminus, the 634-residue chain is DNA-directed RNA polymerase subunit gamma (634 aa).

Zn(2+) contacts are provided by Cys-74, Cys-76, Cys-89, and Cys-92. Residues Asp-471, Asp-473, and Asp-475 each coordinate Mg(2+).

This sequence belongs to the RNA polymerase beta' chain family. RpoC1 subfamily. As to quaternary structure, in cyanobacteria the RNAP catalytic core is composed of 2 alpha, 1 beta, 1 beta', 1 gamma and 1 omega subunit. When a sigma factor is associated with the core the holoenzyme is formed, which can initiate transcription. Mg(2+) serves as cofactor. The cofactor is Zn(2+).

The enzyme catalyses RNA(n) + a ribonucleoside 5'-triphosphate = RNA(n+1) + diphosphate. Its function is as follows. DNA-dependent RNA polymerase catalyzes the transcription of DNA into RNA using the four ribonucleoside triphosphates as substrates. The polypeptide is DNA-directed RNA polymerase subunit gamma (Synechococcus sp. (strain CC9311)).